We begin with the raw amino-acid sequence, 542 residues long: Chaperonin GroEL (542 aa).

Residues 30 to 33 (TLGP), Lys51, 87 to 91 (DGTTT), Gly415, 480 to 482 (NAA), and Asp496 each bind ATP.

The protein belongs to the chaperonin (HSP60) family. Forms a cylinder of 14 subunits composed of two heptameric rings stacked back-to-back. Interacts with the co-chaperonin GroES.

It localises to the cytoplasm. The enzyme catalyses ATP + H2O + a folded polypeptide = ADP + phosphate + an unfolded polypeptide.. Together with its co-chaperonin GroES, plays an essential role in assisting protein folding. The GroEL-GroES system forms a nano-cage that allows encapsulation of the non-native substrate proteins and provides a physical environment optimized to promote and accelerate protein folding. In Tremblaya princeps, this protein is Chaperonin GroEL.